A 198-amino-acid polypeptide reads, in one-letter code: MLYPTPIAKLIDSYSKLPGIGIKTATRLAFYTIGMSNEDVNDFAKNLLAAKRELTYCSICGNLTDDDPCHICTDTSRDQTTILVVEDAKDVSAMEKIQEYHGYYHVLHGLISPMNGVGPDDINLKSLITRLMDGKVSEVIVATNATADGEATSMYISRVLKPAGIKVTRLARGLAVGSDIEYADEVTLLRAIENRTEL.

The segment at 57-72 (CSICGNLTDDDPCHIC) adopts a C4-type zinc-finger fold. Residues 80–175 (TTILVVEDAK…KVTRLARGLA (96 aa)) enclose the Toprim domain.

Belongs to the RecR family.

Its function is as follows. May play a role in DNA repair. It seems to be involved in an RecBC-independent recombinational process of DNA repair. It may act with RecF and RecO. The protein is Recombination protein RecR of Streptococcus pyogenes serotype M1.